Reading from the N-terminus, the 50-residue chain is Thymosin beta-4 (50 aa).

The interval 1 to 50 (MLLPATMSDKPDMAEIEKFDKSKLKKTETQEKNPLPSKETIEQEKQAGES) is disordered. Ser-8 is subject to Phosphoserine. Basic and acidic residues predominate over residues 9-31 (DKPDMAEIEKFDKSKLKKTETQE). At Lys-10 the chain carries N6-acetyllysine. The residue at position 18 (Lys-18) is an N6-acetyllysine; alternate. A Glycyl lysine isopeptide (Lys-Gly) (interchain with G-Cter in SUMO2); alternate cross-link involves residue Lys-18. The residue at position 29 (Thr-29) is a Phosphothreonine. Lys-32 is modified (N6-acetyllysine). Ser-37 carries the post-translational modification Phosphoserine. Residue Lys-38 is modified to N6-acetyllysine. A compositionally biased stretch (basic and acidic residues) spans 39 to 50 (ETIEQEKQAGES). At Thr-40 the chain carries Phosphothreonine. Lys-45 carries the N6-acetyllysine modification.

The protein belongs to the thymosin beta family. In terms of assembly, identified in a complex composed of ACTA1, COBL, GSN AND TMSB4X. Interacts with SERPINB1. AcSDKP is inactivated by ACE, which removes the dipeptide Lys-Pro from its C-terminus. Originally found in thymus but it is widely distributed in many tissues.

It is found in the cytoplasm. The protein resides in the cytoskeleton. In terms of biological role, plays an important role in the organization of the cytoskeleton. Binds to and sequesters actin monomers (G actin) and therefore inhibits actin polymerization. Its function is as follows. Potent inhibitor of bone marrow derived stem cell differentiation. Acts by inhibits the entry of hematopoietic pluripotent stem cells into the S-phase. This chain is Thymosin beta-4 (Tmsb4x), found in Mus musculus (Mouse).